The following is a 745-amino-acid chain: MAWWWGRWRRRWPRRRWRRRRRVWPRRSRFAVRRRRRGRYVSKRRRFRRRRRRRGRPRYRGRRKKRQTLVIRQWQPDVVRFCKINGWLPLIVCGSGSTQNNFIVHSEDITPRGAPYGGNLTHITWCLEAIYQEFLMHRNRWTRSNHDLDLMRYVGVRFKAYRHPTTDYIISYSKTSPFQVTELSYLSCHPLLMLLSKHHIVVKSLQTKPRGKPYVKFFCKPPKLMLNKWYFTKDFAKVPILMMWATACEPRNPWLGEGTLSPCIGFYALKPSIYTSLSNLPAKVQMFATGTQSDSLTTSSTGFYKTVHPSSITTTSKEWEYTYTGLMEKFFKQATNKPYNWENYGTPADYGSTYTTFSTHRSTRYETIKKEYQKVYPTLTTQTPTNFFLTQEFGFYSPYYLTPSKRDIDWHTPYTYTRYNPLADKGLGNMIWADWCSRDEAAYSPTQSKCMLKDLPLFILFYGYIDWVQKSIGSQTITRDMRLMVICPYTEPQLVDPQDKTKGFVLYGDTFANGNMPVLAPQIPISWFVRWYPNFAHQREVLERVVSCGPFMVRDQEKNSWDITLGYHFLFKWGGSPLPSQAIDDPSQKPTHALPEPGTLPRILQVSDPARLGPKTIFHQWDQRRGLFTKRSIKRMSEYSSDDENFSPGPSKRPALDTRPEGLAGEQRSAYAFLRALQDSQDSEESQEEAPLLEEQAHQKEKEELLLKQPQQQRQHQRVLKRGLRVLFGDVLKLRRGLHIDPLLT.

Disordered stretches follow at residues 44–64 (RRRFRRRRRRRGRPRYRGRRK), 580–602 (SQAIDDPSQKPTHALPEPGTLPR), 638–662 (EYSSDDENFSPGPSKRPALDTRPEG), and 678–699 (QDSQDSEESQEEAPLLEEQAHQ). Acidic residues predominate over residues 681–692 (QDSEESQEEAPL).

The protein belongs to the anelloviridae capsid protein family.

It localises to the virion. Its function is as follows. Self assemble to form an icosahedral capsid. This is Capsid protein from Torque teno virus (isolate Human/China/CT23F/2001) (TTV).